A 495-amino-acid polypeptide reads, in one-letter code: UDP-N-acetylmuramoyl-L-alanyl-D-glutamate--2,6-diaminopimelate ligase (495 aa).

UDP-N-acetyl-alpha-D-muramoyl-L-alanyl-D-glutamate-binding positions include leucine 27, serine 29, and 44 to 46 (HQA). Residue 116–122 (GTNGKTT) participates in ATP binding. UDP-N-acetyl-alpha-D-muramoyl-L-alanyl-D-glutamate contacts are provided by residues asparagine 157, 158-159 (TT), serine 185, glutamine 191, and arginine 193. An N6-carboxylysine modification is found at lysine 225. Residues arginine 390, 414 to 417 (DNPR), glycine 465, and glutamate 469 each bind meso-2,6-diaminopimelate. The Meso-diaminopimelate recognition motif motif lies at 414 to 417 (DNPR).

It belongs to the MurCDEF family. MurE subfamily. It depends on Mg(2+) as a cofactor. In terms of processing, carboxylation is probably crucial for Mg(2+) binding and, consequently, for the gamma-phosphate positioning of ATP.

The protein localises to the cytoplasm. The enzyme catalyses UDP-N-acetyl-alpha-D-muramoyl-L-alanyl-D-glutamate + meso-2,6-diaminopimelate + ATP = UDP-N-acetyl-alpha-D-muramoyl-L-alanyl-gamma-D-glutamyl-meso-2,6-diaminopimelate + ADP + phosphate + H(+). Its pathway is cell wall biogenesis; peptidoglycan biosynthesis. Catalyzes the addition of meso-diaminopimelic acid to the nucleotide precursor UDP-N-acetylmuramoyl-L-alanyl-D-glutamate (UMAG) in the biosynthesis of bacterial cell-wall peptidoglycan. This Shigella flexneri protein is UDP-N-acetylmuramoyl-L-alanyl-D-glutamate--2,6-diaminopimelate ligase.